The primary structure comprises 347 residues: Selenide, water dikinase (347 aa).

C17 is a catalytic residue. ATP contacts are provided by residues K20 and 48-50 (TRD). D51 contacts Mg(2+). ATP contacts are provided by residues D68, D91, and 139–141 (GHS). D91 provides a ligand contact to Mg(2+). D227 is a binding site for Mg(2+).

The protein belongs to the selenophosphate synthase 1 family. Class I subfamily. As to quaternary structure, homodimer. It depends on Mg(2+) as a cofactor.

It carries out the reaction hydrogenselenide + ATP + H2O = selenophosphate + AMP + phosphate + 2 H(+). In terms of biological role, synthesizes selenophosphate from selenide and ATP. In Escherichia coli O139:H28 (strain E24377A / ETEC), this protein is Selenide, water dikinase.